Reading from the N-terminus, the 73-residue chain is Antitoxin VapB20 (73 aa).

Functionally, antitoxin component of a type II toxin-antitoxin (TA) system. Upon expression in E.coli neutralizes the toxic effect of cognate toxin VapC20. This is Antitoxin VapB20 (vapB20) from Mycobacterium tuberculosis (strain ATCC 25618 / H37Rv).